Here is a 66-residue protein sequence, read N- to C-terminus: U1-theraphotoxin-Cg1d 1 (66 aa).

The first 21 residues, 1 to 21, serve as a signal peptide directing secretion; the sequence is MKMSALFVIFGLALLFCNSFA. A propeptide spanning residues 22-29 is cleaved from the precursor; the sequence is AELKATGR. Intrachain disulfides connect cysteine 31-cysteine 46, cysteine 38-cysteine 51, and cysteine 45-cysteine 58. At proline 63 the chain carries Proline amide.

This sequence belongs to the neurotoxin 10 (Hwtx-1) family. 46 (Jztx-7/10/12) subfamily. Expressed by the venom gland.

It localises to the secreted. Functionally, probable ion channel inhibitor. The sequence is that of U1-theraphotoxin-Cg1d 1 from Chilobrachys guangxiensis (Chinese earth tiger tarantula).